The chain runs to 204 residues: Holliday junction branch migration complex subunit RuvA (204 aa).

Residues 1-64 (MIGKLKGTID…EDQLKLFGFM (64 aa)) form a domain I region. Residues 65-143 (TALEREWFNL…AYAGEAINIA (79 aa)) are domain II. The interval 144 to 151 (LKRELGEG) is flexible linker. The domain III stretch occupies residues 152–204 (VAAAPVADAVSALTNLGYSRDQAANAVAAAMKTAGEGADSAKLIRLGLKELAR).

It belongs to the RuvA family. As to quaternary structure, homotetramer. Forms an RuvA(8)-RuvB(12)-Holliday junction (HJ) complex. HJ DNA is sandwiched between 2 RuvA tetramers; dsDNA enters through RuvA and exits via RuvB. An RuvB hexamer assembles on each DNA strand where it exits the tetramer. Each RuvB hexamer is contacted by two RuvA subunits (via domain III) on 2 adjacent RuvB subunits; this complex drives branch migration. In the full resolvosome a probable DNA-RuvA(4)-RuvB(12)-RuvC(2) complex forms which resolves the HJ.

The protein localises to the cytoplasm. In terms of biological role, the RuvA-RuvB-RuvC complex processes Holliday junction (HJ) DNA during genetic recombination and DNA repair, while the RuvA-RuvB complex plays an important role in the rescue of blocked DNA replication forks via replication fork reversal (RFR). RuvA specifically binds to HJ cruciform DNA, conferring on it an open structure. The RuvB hexamer acts as an ATP-dependent pump, pulling dsDNA into and through the RuvAB complex. HJ branch migration allows RuvC to scan DNA until it finds its consensus sequence, where it cleaves and resolves the cruciform DNA. This chain is Holliday junction branch migration complex subunit RuvA, found in Rhizobium etli (strain ATCC 51251 / DSM 11541 / JCM 21823 / NBRC 15573 / CFN 42).